The primary structure comprises 1306 residues: Angiotensin-converting enzyme (1306 aa).

The N-terminal stretch at 1 to 28 (MGAASGRRSPPLLLPLLLLLLPPPPVIL) is a signal peptide. Residues 29-1256 (ELDPALQPGN…GLNLEEQQAR (1228 aa)) are Extracellular-facing. 2 Peptidase M2 domains span residues 40 to 624 (PADE…LGWP) and 643 to 1222 (VSDE…LGWP). Residues asparagine 54, asparagine 74, asparagine 111, asparagine 146, and asparagine 160 are each glycosylated (N-linked (GlcNAc...) asparagine). Cysteines 157 and 165 form a disulfide. Position 231 (tyrosine 231) interacts with chloride. Asparagine 318 is a glycosylation site (N-linked (GlcNAc...) asparagine). Cysteine 359 and cysteine 377 form a disulfide bridge. Histidine 390 is a binding site for Zn(2+). The Proton acceptor 1 role is filled by glutamate 391. The Zn(2+) site is built by histidine 394 and glutamate 418. N-linked (GlcNAc...) asparagine glycans are attached at residues asparagine 445 and asparagine 509. The active-site Proton donor 1 is the histidine 520. An N-linked (GlcNAc...) asparagine glycan is attached at asparagine 523. Arginine 529 contributes to the chloride binding site. Cysteine 545 and cysteine 557 are disulfide-bonded. Residues asparagine 673, asparagine 695, asparagine 714, and asparagine 760 are each glycosylated (N-linked (GlcNAc...) asparagine). A disulfide bridge links cysteine 757 with cysteine 763. Residues arginine 791 and tyrosine 829 each contribute to the chloride site. Asparagine 942 is a glycosylation site (N-linked (GlcNAc...) asparagine). A disulfide bond links cysteine 957 and cysteine 975. Histidine 988 serves as a coordination point for Zn(2+). Glutamate 989 serves as the catalytic Proton acceptor 2. The Zn(2+) site is built by histidine 992 and glutamate 1016. The chloride site is built by tryptophan 1090 and arginine 1094. Histidine 1118 (proton donor 2) is an active-site residue. Arginine 1127 contributes to the chloride binding site. A disulfide bond links cysteine 1143 and cysteine 1155. 2 N-linked (GlcNAc...) asparagine glycosylation sites follow: asparagine 1191 and asparagine 1225. The segment at 1215 to 1256 (HGEKLGWPQYNWTPNSARLEGPFVGSGRVNFLGLNLEEQQAR) is juxtamembrane stalk. A helical membrane pass occupies residues 1257-1277 (VGQWVLLFLGVALLVATLGLT). At 1278-1306 (QRLFSIRHHSLRRPHRGPQFGSEVELRHS) the chain is on the cytoplasmic side. At serine 1299 the chain carries Phosphoserine.

The protein belongs to the peptidase M2 family. Monomer and homodimer; homodimerizes following binding to an inhibitor. Interacts with calmodulin (CALM1, CALM2 or CALM3); interaction takes place in the cytoplasmic region and regulates phosphorylation and proteolytic cleavage. Zn(2+) is required as a cofactor. The cofactor is chloride. In terms of processing, produced following proteolytic cleavage by secretase enzymes that cleave the transmembrane form in the juxtamembrane stalk region upstream of the transmembrane region. Cleavage can take place at different sites of the juxtamembrane stalk region. Post-translationally, phosphorylated by CK2 on Ser-1299; which allows membrane retention. Phosphorylated on tyrosine residues on its extracellular part, promoting cleavage by secretase enzymes and formation of the soluble form (Angiotensin-converting enzyme, soluble form).

It is found in the cell membrane. The protein resides in the cytoplasm. It localises to the secreted. It carries out the reaction Release of a C-terminal dipeptide, oligopeptide-|-Xaa-Yaa, when Xaa is not Pro, and Yaa is neither Asp nor Glu. Thus, conversion of angiotensin I to angiotensin II, with increase in vasoconstrictor activity, but no action on angiotensin II.. It catalyses the reaction angiotensin I + H2O = L-histidyl-L-leucine + angiotensin II. The catalysed reaction is bradykinin + H2O = L-Phe-L-Arg + bradykinin(1-7). The enzyme catalyses substance P + H2O = substance P(1-9) + L-Leu-L-Met-NH2. It carries out the reaction substance P + H2O = substance P(1-8) + Gly-L-Leu-L-Met-NH2. It catalyses the reaction substance P + H2O = L-Phe-L-Phe-Gly-L-Leu-L-Met-NH2 + substance P(1-6). The catalysed reaction is neurotensin + H2O = neurotensin(1-11) + L-isoleucyl-L-leucine. The enzyme catalyses goralatide + H2O = N-acetyl-L-seryl-L-aspartate + L-lysyl-L-proline. It carries out the reaction Met-enkephalin + H2O = L-phenylalanyl-L-methionine + L-tyrosylglycylglycine. It catalyses the reaction Leu-enkephalin + H2O = L-tyrosylglycylglycine + L-phenylalanyl-L-leucine. The catalysed reaction is Met-enkephalin-Arg-Phe + H2O = L-arginyl-L-phenylalanine + Met-enkephalin. The dipeptidyl carboxypeptidase activity is strongly activated by chloride. The dipeptidyl carboxypeptidase activity is specifically inhibited by lisinopril, captopril and enalaprilat. Dipeptidyl carboxypeptidase that removes dipeptides from the C-terminus of a variety of circulating hormones, such as angiotensin I, bradykinin or enkephalins, thereby playing a key role in the regulation of blood pressure, electrolyte homeostasis or synaptic plasticity. Composed of two similar catalytic domains, each possessing a functional active site, with different selectivity for substrates. Plays a major role in the angiotensin-renin system that regulates blood pressure and sodium retention by the kidney by converting angiotensin I to angiotensin II, resulting in an increase of the vasoconstrictor activity of angiotensin. Also able to inactivate bradykinin, a potent vasodilator, and therefore enhance the blood pressure response. Acts as a regulator of synaptic transmission by mediating cleavage of neuropeptide hormones, such as substance P, neurotensin or enkephalins. Catalyzes degradation of different enkephalin neuropeptides (Met-enkephalin, Leu-enkephalin, Met-enkephalin-Arg-Phe and possibly Met-enkephalin-Arg-Gly-Leu). Acts as a regulator of synaptic plasticity in the nucleus accumbens of the brain by mediating cleavage of Met-enkephalin-Arg-Phe, a strong ligand of Mu-type opioid receptor OPRM1, into Met-enkephalin. Met-enkephalin-Arg-Phe cleavage by ACE decreases activation of OPRM1, leading to long-term synaptic potentiation of glutamate release. Also acts as a regulator of hematopoietic stem cell differentiation by mediating degradation of hemoregulatory peptide N-acetyl-SDKP (AcSDKP). Acts as a regulator of cannabinoid signaling pathway by mediating degradation of hemopressin, an antagonist peptide of the cannabinoid receptor CNR1. Involved in amyloid-beta metabolism by catalyzing degradation of Amyloid-beta protein 40 and Amyloid-beta protein 42 peptides, thereby preventing plaque formation. Catalyzes cleavage of cholecystokinin (maturation of Cholecystokinin-8 and Cholecystokinin-5) and Gonadoliberin-1 (both maturation and degradation) hormones. Degradation of hemoregulatory peptide N-acetyl-SDKP (AcSDKP) and amyloid-beta proteins is mediated by the N-terminal catalytic domain, while angiotensin I and cholecystokinin cleavage is mediated by the C-terminal catalytic region. Functionally, soluble form that is released in blood plasma and other body fluids following proteolytic cleavage in the juxtamembrane stalk region. In Bos taurus (Bovine), this protein is Angiotensin-converting enzyme.